A 153-amino-acid polypeptide reads, in one-letter code: Vasotocin-neurophysin VT 1 (153 aa).

The N-terminal stretch at 1–20 (MPYSTFPLLWVLGLLALSSA) is a signal peptide. An intrachain disulfide couples Cys-21 to Cys-26. Gly-29 carries the post-translational modification Glycine amide. 7 disulfide bridges follow: Cys-41–Cys-85, Cys-44–Cys-58, Cys-52–Cys-75, Cys-59–Cys-65, Cys-92–Cys-104, Cys-98–Cys-116, and Cys-105–Cys-110.

It belongs to the vasopressin/oxytocin family. Seven disulfide bonds are present in neurophysin.

It is found in the secreted. Functionally, vasotocin is an antidiuretic hormone. In Oncorhynchus keta (Chum salmon), this protein is Vasotocin-neurophysin VT 1.